The following is a 407-amino-acid chain: Methyltransferase/ribosomally synthesized type I borosin cyclic peptide precursor ceuMA2 (407 aa).

The methyltransferase domain stretch occupies residues 1-246; sequence MATTKTGSLT…TTSTLYIPPR (246 aa). Residues R70, Y74, and Y96 contribute to the active site. S-adenosyl-L-methionine-binding residues include Y96, H98, V101, A128, Q170, G208, S239, and T240. Residues 247–370 form a clasp domain region; that stretch reads EIAPVDQRIM…GPVYKVMRAT (124 aa). Positions 371-393 are precursor leader; that stretch reads PAAIAAGQEHSLDEIAGSADSES. N-methylthreonine is present on residues T399 and T400. I401 carries the post-translational modification N-methylisoleucine. An N-methylvaline mark is found at V402 and V403. At I404 the chain carries N-methylisoleucine. N-methylvaline is present on V405. The residue at position 406 (H406) is an N-methylhistidine.

In the N-terminal section; belongs to the precorrin methyltransferase family. In terms of assembly, homodimer. CeuMA2 automethylates at Thr-399, Thr-400, Ile-401, Val-402, Val-403, Ile-404, Val-405 and His-406 before being processed by a prolyloligopeptidase which likely forms a peptidyl ester upon removal of the follower propeptide, which then undergoes macrocyclization with the N-terminus of the modified core peptide. Peptide backbone alpha-N-methylations change the physicochemical properties of amide bonds to provide structural constraints and other favorable characteristics including biological membrane permeability to peptides.

Its pathway is secondary metabolite biosynthesis. In terms of biological role, fusion protein of the methyltransferase ceuM2 and a type I borosin core peptide; part of the gene cluster that mediates the biosynthesis of a type I borosin, a highly methylated cyclic peptide with potent biological activities. Type I borosins derive from the C-terminus of the fusion protein, and it is the same protein that methylates its own C-terminus using S-adenosyl methionine (SAM). The C-terminus is subsequently cleaved off and macrocyclized by a prolyloligopeptidase to give the final product. The polypeptide is Methyltransferase/ribosomally synthesized type I borosin cyclic peptide precursor ceuMA2 (Cerrena unicolor (Canker rot fungus)).